The chain runs to 5061 residues: E3 ubiquitin-protein ligase rnf213-beta (5061 aa).

Positions 1 to 12 are enriched in basic residues; that stretch reads MTRKRKSGKKGK. The segment at 1-334 is disordered; that stretch reads MTRKRKSGKK…QRKPSPVRAP (334 aa). Composition is skewed to polar residues over residues 24 to 52 and 75 to 87; these read GGST…TQKD and SDGS…TNKE. Over residues 100-110 the composition is skewed to basic residues; the sequence is LQKKGPQKRKG. Polar residues-rich tracts occupy residues 127-163 and 172-200; these read QTSY…TSAS and TETV…QPPQ. 2 stretches are compositionally biased toward basic and acidic residues: residues 217-229 and 236-289; these read KGSE…EESV and LSEI…EEPK. The span at 292–301 shows a compositional bias: low complexity; sequence AAAAATGKTG. Positions 306-322 are enriched in polar residues; the sequence is EQTNQIEANQDSTMESK. Residues 1923–1928, Glu2023, Asp2074, Lys2417, and Ser2492 each bind ATP; that span reads AVGKSL. 10 residues coordinate Zn(2+): Cys3957, Cys3960, Cys3972, His3974, Cys3977, Cys3980, Cys3993, Cys3996, Cys4451, and His4455. The RING-type zinc finger occupies 3957–3997; it reads CRVCLMELSEPFALPCEHVFCRSCLRRSMEREEAQHCPVCR. Residues 4429-4501 form an RZ-type zinc finger; the sequence is MPDDHTSEAK…AYGDYDRTRP (73 aa). Cys4462 (nucleophile; for E3 ubiquitin-lipopolysaccharide ligase activity) is an active-site residue. Residues Cys4471 and Cys4474 each coordinate Zn(2+).

This sequence belongs to the AAA ATPase family.

The protein localises to the cytoplasm. It localises to the cytosol. The protein resides in the lipid droplet. The enzyme catalyses S-ubiquitinyl-[E2 ubiquitin-conjugating enzyme]-L-cysteine + [acceptor protein]-L-lysine = [E2 ubiquitin-conjugating enzyme]-L-cysteine + N(6)-ubiquitinyl-[acceptor protein]-L-lysine.. It carries out the reaction ATP + H2O = ADP + phosphate + H(+). Its pathway is protein modification; protein ubiquitination. Atypical E3 ubiquitin ligase that can catalyze ubiquitination of both proteins and lipids, and which is involved in various processes, such as lipid metabolism, angiogenesis and cell-autonomous immunity. Acts as a key immune sensor by catalyzing ubiquitination of the lipid A moiety of bacterial lipopolysaccharide (LPS) via its RZ-type zinc-finger: restricts the proliferation of cytosolic bacteria, such as Salmonella, by generating the bacterial ubiquitin coat through the ubiquitination of LPS. Ubiquitination of LPS triggers cell-autonomous immunity, such as antibacterial autophagy, leading to degradation of the microbial invader. Involved in lipid metabolism by regulating fat storage and lipid droplet formation; act by inhibiting the lipolytic process. Also regulates lipotoxicity by inhibiting desaturation of fatty acids. Also acts as an E3 ubiquitin-protein ligase via its RING-type zinc finger. Involved in the non-canonical Wnt signaling pathway in vascular development: acts by mediating ubiquitination and degradation of proteins downstream of rspo3, leading to inhibit the non-canonical Wnt signaling pathway and promoting vessel regression. Also has ATPase activity; ATPase activity is required for ubiquitination of LPS. This is E3 ubiquitin-protein ligase rnf213-beta (rnf213b) from Danio rerio (Zebrafish).